The following is an 81-amino-acid chain: Photosystem I iron-sulfur center (81 aa).

2 consecutive 4Fe-4S ferredoxin-type domains span residues 2 to 31 and 39 to 68; these read AHSV…MIPW and IASA…VRVY. Residues cysteine 11, cysteine 14, cysteine 17, cysteine 21, cysteine 48, cysteine 51, cysteine 54, and cysteine 58 each coordinate [4Fe-4S] cluster.

As to quaternary structure, the eukaryotic PSI reaction center is composed of at least 11 subunits. [4Fe-4S] cluster is required as a cofactor.

It is found in the plastid. Its subcellular location is the chloroplast thylakoid membrane. The enzyme catalyses reduced [plastocyanin] + hnu + oxidized [2Fe-2S]-[ferredoxin] = oxidized [plastocyanin] + reduced [2Fe-2S]-[ferredoxin]. In terms of biological role, apoprotein for the two 4Fe-4S centers FA and FB of photosystem I (PSI); essential for photochemical activity. FB is the terminal electron acceptor of PSI, donating electrons to ferredoxin. The C-terminus interacts with PsaA/B/D and helps assemble the protein into the PSI complex. Required for binding of PsaD and PsaE to PSI. PSI is a plastocyanin-ferredoxin oxidoreductase, converting photonic excitation into a charge separation, which transfers an electron from the donor P700 chlorophyll pair to the spectroscopically characterized acceptors A0, A1, FX, FA and FB in turn. This Psilotum nudum (Whisk fern) protein is Photosystem I iron-sulfur center.